We begin with the raw amino-acid sequence, 222 residues long: MPSLSKEAALVHEALVARGLETPLRPPVHEMDNETRKSLIAGHMTEIMQLLNLDLADDSLMETPHRIAKMYVDEIFSGLDYANFPKITLIENKMKVDEMVTVRDITLTSTCEHHFVTIDGKATVAYIPKDSVIGLSKINRIVQFFAQRPQVQERLTQQILIALQTLLGTNNVAVSIDAVHYCVKARGIRDATSATTTTSLGGLFKSSQNTRHEFLRAVRHHN.

Zn(2+) contacts are provided by Cys-111, His-114, and Cys-182.

The protein belongs to the GTP cyclohydrolase I family. Homomer.

The catalysed reaction is GTP + H2O = 7,8-dihydroneopterin 3'-triphosphate + formate + H(+). It functions in the pathway cofactor biosynthesis; 7,8-dihydroneopterin triphosphate biosynthesis; 7,8-dihydroneopterin triphosphate from GTP: step 1/1. In Shigella boydii serotype 18 (strain CDC 3083-94 / BS512), this protein is GTP cyclohydrolase 1.